The sequence spans 360 residues: Peptide chain release factor 1 (360 aa).

An N5-methylglutamine modification is found at Gln-235. The tract at residues 284–312 is disordered; sequence AKRQQAEASTRRNLLGSGDRSDRNRTYNF.

It belongs to the prokaryotic/mitochondrial release factor family. Methylated by PrmC. Methylation increases the termination efficiency of RF1.

The protein localises to the cytoplasm. Functionally, peptide chain release factor 1 directs the termination of translation in response to the peptide chain termination codons UAG and UAA. This is Peptide chain release factor 1 from Escherichia coli O81 (strain ED1a).